A 647-amino-acid chain; its full sequence is DNA mismatch repair protein MutL (647 aa).

Residues 377–396 (EEPQAVKQSAQLWQPPKQEW) are disordered. Positions 387–396 (QLWQPPKQEW) are enriched in low complexity.

It belongs to the DNA mismatch repair MutL/HexB family.

Its function is as follows. This protein is involved in the repair of mismatches in DNA. It is required for dam-dependent methyl-directed DNA mismatch repair. May act as a 'molecular matchmaker', a protein that promotes the formation of a stable complex between two or more DNA-binding proteins in an ATP-dependent manner without itself being part of a final effector complex. The protein is DNA mismatch repair protein MutL of Bacillus cereus (strain AH187).